A 199-amino-acid polypeptide reads, in one-letter code: Superoxide dismutase [Mn/Fe] 2 (199 aa).

His27, His81, Asp161, and His165 together coordinate Fe(3+). Residues His27, His81, Asp161, and His165 each coordinate Mn(2+).

The protein belongs to the iron/manganese superoxide dismutase family. In terms of assembly, homodimer. Can also form a heterodimer with SodA. It depends on Mn(2+) as a cofactor. The cofactor is Fe(3+).

It carries out the reaction 2 superoxide + 2 H(+) = H2O2 + O2. Its function is as follows. Destroys superoxide anion radicals which are normally produced within the cells and which are toxic to biological systems. Catalyzes the dismutation of superoxide anion radicals into O2 and H2O2 by successive reduction and oxidation of the transition metal ion at the active site. The protein is Superoxide dismutase [Mn/Fe] 2 (sodM) of Staphylococcus aureus (strain bovine RF122 / ET3-1).